The chain runs to 448 residues: MNTHLTETWEKAINIIKGELTEVSFNTWIKSINPISLENNSLKLAVPNDFTKGILESRYKDLIVNALKLLTSKKYNIDFIVTTEEKIEENQKNHNNEKSNIVVNDEMSTMLNPKYTFDSFVIGNSNRFAHAASLAVAESPAKAYNPLFIYGGVGLGKTHLMHAIGHYILHNNPKSQVVYVSSEKFTNELINSIKDDKNVEFRNKYRNIDILLVDDIQFIAGKERTQEEFFHTFNALYEANKQIIISSDRPPKEIPTLEDRLRSRFEWGLIADIQAPDFETRMAILKKKADVENLNIPNEVMVYIATKIKSNIRELEGALIRIVAFSSLTNKEISIDLASEALKDIISSKQTRQVTIDIIQEVVANYYNLKIEDLKSARRTRNIAFPRQIAMYLSRKLTDMSLPKIGEEFGGRDHTTVIHAYEKISNNLKKDESLQNAIKELNKRINQK.

The interval 1 to 73 is domain I, interacts with DnaA modulators; sequence MNTHLTETWE…VNALKLLTSK (73 aa). A domain II region spans residues 73–109; sequence KKYNIDFIVTTEEKIEENQKNHNNEKSNIVVNDEMST. Residues 110–326 form a domain III, AAA+ region region; the sequence is MLNPKYTFDS…GALIRIVAFS (217 aa). Positions 154, 156, 157, and 158 each coordinate ATP. The domain IV, binds dsDNA stretch occupies residues 327-448; sequence SLTNKEISID…KELNKRINQK (122 aa).

It belongs to the DnaA family. In terms of assembly, oligomerizes as a right-handed, spiral filament on DNA at oriC.

It localises to the cytoplasm. In terms of biological role, plays an essential role in the initiation and regulation of chromosomal replication. ATP-DnaA binds to the origin of replication (oriC) to initiate formation of the DNA replication initiation complex once per cell cycle. Binds the DnaA box (a 9 base pair repeat at the origin) and separates the double-stranded (ds)DNA. Forms a right-handed helical filament on oriC DNA; dsDNA binds to the exterior of the filament while single-stranded (ss)DNA is stabiized in the filament's interior. The ATP-DnaA-oriC complex binds and stabilizes one strand of the AT-rich DNA unwinding element (DUE), permitting loading of DNA polymerase. After initiation quickly degrades to an ADP-DnaA complex that is not apt for DNA replication. Binds acidic phospholipids. The sequence is that of Chromosomal replication initiator protein DnaA from Clostridium botulinum (strain ATCC 19397 / Type A).